The chain runs to 320 residues: Tryptophan--tRNA ligase (320 aa).

ATP is bound by residues 8-10 (QPT) and 16-17 (GN). Positions 9–17 (PTGRPHWGN) match the 'HIGH' region motif. Asp-131 is a binding site for L-tryptophan. Residues 143–145 (GVD), Val-182, and 189–193 (KMSKS) contribute to the ATP site. The short motif at 189–193 (KMSKS) is the 'KMSKS' region element.

It belongs to the class-I aminoacyl-tRNA synthetase family. In terms of assembly, homodimer.

Its subcellular location is the cytoplasm. The catalysed reaction is tRNA(Trp) + L-tryptophan + ATP = L-tryptophyl-tRNA(Trp) + AMP + diphosphate + H(+). Its function is as follows. Catalyzes the attachment of tryptophan to tRNA(Trp). The chain is Tryptophan--tRNA ligase from Rhodopirellula baltica (strain DSM 10527 / NCIMB 13988 / SH1).